The chain runs to 253 residues: 3-deoxy-manno-octulosonate cytidylyltransferase (253 aa).

Belongs to the KdsB family.

It is found in the cytoplasm. It carries out the reaction 3-deoxy-alpha-D-manno-oct-2-ulosonate + CTP = CMP-3-deoxy-beta-D-manno-octulosonate + diphosphate. The protein operates within nucleotide-sugar biosynthesis; CMP-3-deoxy-D-manno-octulosonate biosynthesis; CMP-3-deoxy-D-manno-octulosonate from 3-deoxy-D-manno-octulosonate and CTP: step 1/1. It functions in the pathway bacterial outer membrane biogenesis; lipopolysaccharide biosynthesis. Functionally, activates KDO (a required 8-carbon sugar) for incorporation into bacterial lipopolysaccharide in Gram-negative bacteria. In Neisseria gonorrhoeae (strain ATCC 700825 / FA 1090), this protein is 3-deoxy-manno-octulosonate cytidylyltransferase.